The chain runs to 962 residues: MGKPTLLEPGHLYNVPAEHKNDVPIHYIITWIKQRLPEFGGAIPTSLADRVLIIKSRTGSGKSTALPVHVFRILRNENTHSFQKYLGRSVICTQPRVLTAVTLAKDIGASTHYPDMILGQTVGYQTKPLTEKPNRGLIYATAGVLLAQLHTMTDDEIASRYAFMIIDEAHERALGIDLMLMYIKSMLERMLQRGSIGALRIPFVILTSATIDTHKYSTYFGIGKENIILVEGRQYGVETHWPLYNTNNYIKTACETALTIHKENIHDRPTEADILIFMPGMAEIRFLSMLLNNANMDLAKEKLPLMLILPIDSEAIAQENEAYLGLKAEIKNLWVKNPLTAKVEKPLRRVIVSTVVAETGLTIETLKYVIDPGWNRSIETYYPEWAGGLITRPAAQSRIEQRKGRVGRVFPGHFYPLYTKHVFEQIPAQQYPEIITEGPGAIFLSIVVETIKKNKEGVFKAEEIDMLDPPPTDALASAIERAIVAGLLTRGEKGLQLTQLGDIASRFSFLSIEEARMCFSGYFWQAAISDIATILAVVSVADKKLTNLLDSKQRNGAMLAEAVLAGIPPFLQNIDNAYTNIHLLLADDLLEGLFIFEGFQHAIVYFINNKVNNVAKHLREWCEKKMLKYSSMVQILARREDILNELAIVGLNPFHHWQNRLASANAETFLKRVCTLKQCMYEAYRLNCFCYDEHRLLYTGRNGIHFSYHDAVIKNPSCIVTPRIMLSPVSKQYMEWRLEPSFVSVLDGFVNVDINFLLPRQEIPNILGGVEDEEEEPPLPIQVFLHKYVKTHFHFSGKSFKELKMKPGQTIKFPETTLINMIPDIPKNVVQTYLEISVCHQYSFKRLIYCETFYTDMDDVQHENSVELIGLPMAAHHLTINDFNKLYHLLKPDGFLMVYDLHQSQEAFWLHSLQDALGHHTIRRDMDFHTIPEWETIFKECGFTPIFSKQPSEHELFIVFKK.

The region spanning 43–229 (IPTSLADRVL…FGIGKENIIL (187 aa)) is the Helicase ATP-binding domain. 56 to 63 (SRTGSGKS) serves as a coordination point for ATP. Positions 167-170 (DEAH) match the DEAH box motif. Residues 253–459 (ACETALTIHK…TIKKNKEGVF (207 aa)) enclose the Helicase C-terminal domain. A helical transmembrane segment spans residues 521-541 (GYFWQAAISDIATILAVVSVA).

Belongs to the DEAD box helicase family. DEAH subfamily.

The protein localises to the host membrane. The protein resides in the virion. The catalysed reaction is ATP + H2O = ADP + phosphate + H(+). The chain is Putative RNA Helicase B962L from African swine fever virus (isolate Warthog/Namibia/Wart80/1980) (ASFV).